A 645-amino-acid chain; its full sequence is Homeobox protein B-H2 (645 aa).

6 disordered regions span residues 1-50 (MTTM…TTAT), 86-134 (SSGG…QAAL), 149-176 (RERE…AHHP), 240-259 (SHLS…HDER), 265-385 (MLQQ…KART), and 553-645 (GAQQ…ALEV). Residues 18-29 (SAPSATAHHPAA) are compositionally biased toward low complexity. Residues 106-121 (QHHHHHQQQQQHHHHQ) are compositionally biased toward basic residues. Low complexity predominate over residues 122–134 (QQQQQQQHQQAAL). Over residues 149–165 (REREREREREHYRERHS) the composition is skewed to basic and acidic residues. Residues 244 to 253 (HQQHHPHLHH) are compositionally biased toward basic residues. A compositionally biased stretch (low complexity) spans 275–316 (NNNNNNNNSSSASNNNNNNNNSASANSNIISGNSSSSNNNNG). Over residues 317–328 (SGNGNMLLGGPG) the composition is skewed to gly residues. Residues 329–339 (SSISGDQASTI) are compositionally biased toward polar residues. The span at 362-377 (SSANGDSSSHLSLSLS) shows a compositional bias: low complexity. Residues 380-439 (QRKARTAFTDHQLQTLEKSFERQKYLSVQDRMELANKLELSDCQVKTWYQNRRTKWKRQT) constitute a DNA-binding region (homeobox). The segment covering 553 to 574 (GAQQQQQQPPAASRSPATSQSA) has biased composition (low complexity). Residues 583–592 (TSSSSRQRLI) are compositionally biased toward polar residues. A Phosphothreonine modification is found at threonine 593. Over residues 594–603 (PSPPLNPGSP) the composition is skewed to pro residues. A phosphoserine mark is found at serine 595 and serine 602. The segment covering 618-632 (DEERDIERERERERE) has biased composition (basic and acidic residues). Acidic residues predominate over residues 633 to 645 (RDEDDEEELALEV).

This sequence belongs to the Antp homeobox family. As to expression, B-H1 and B-H2 are abundant in the eye-antenna imaginal disk. Expressed in R1 and R6 cells throughout larval stage until 30 hours after puparium formation, at which time expression is seen in the anterior and posterior primary pigment cells. Coexpressed in embryonic glial cells, neurons of the CNS and PNS, most latitudinal anterior cells of the developing notum and the central circular region of the leg and antennal imaginal disk throughout larval development.

The protein resides in the nucleus. Functionally, B-H1 and B-H2 are regulated by members of the wg signaling pathway; wg and dpp. B-H1 and B-H2 are coexpressed and functionally required in R1 and R6 receptor cells and primary pigment cells for normal eye development. Coexpression is also required for the fate determination of external sensory organs, formation of notal microchaetae, formation of presutural macrochaetae, antennal development and for distal leg morphogenesis; segmentation and specification of tarsal segments 3-5. The protein is Homeobox protein B-H2 (B-H2) of Drosophila melanogaster (Fruit fly).